The chain runs to 513 residues: Xylose import ATP-binding protein XylG (513 aa).

2 ABC transporter domains span residues 5–242 (LEMK…VGRE) and 259–505 (LRIE…LRSE). 37–44 (GENGSGKS) contributes to the ATP binding site.

Belongs to the ABC transporter superfamily. Xylose importer (TC 3.A.1.2.4) family. As to quaternary structure, the complex is composed of two ATP-binding proteins (XylG), two transmembrane proteins (XylH) and a solute-binding protein (XylF).

It is found in the cell inner membrane. The catalysed reaction is D-xylose(out) + ATP + H2O = D-xylose(in) + ADP + phosphate + H(+). Part of the ABC transporter complex XylFGH involved in xylose import. Responsible for energy coupling to the transport system. This chain is Xylose import ATP-binding protein XylG, found in Shigella flexneri serotype 5b (strain 8401).